The chain runs to 92 residues: Phospholemman (92 aa).

Residues 1 to 20 form the signal peptide; the sequence is MASLSHILVLCVGLLAMVNA. The Extracellular portion of the chain corresponds to 21–35; sequence EAPQEHDPFTYDYQS. The helical transmembrane segment at 36-56 threads the bilayer; the sequence is LRIGGLIIAGILFILGILIVL. Over 57 to 92 the chain is Cytoplasmic; the sequence is SRRCRCKFNQQQRTGEPDEEEGTFRSSIRRLSTRRR. Cys60 carries the S-palmitoyl cysteine lipid modification. S-glutathionyl cysteine; alternate is present on Cys62. Residue Cys62 is the site of S-palmitoyl cysteine; alternate attachment. Residues 65–92 are disordered; the sequence is NQQQRTGEPDEEEGTFRSSIRRLSTRRR. Thr79 carries the phosphothreonine modification. At Ser82 the chain carries Phosphoserine. A Phosphoserine; by PKA and PKC modification is found at Ser83. Residues 83 to 92 show a composition bias toward basic residues; it reads SIRRLSTRRR. Ser88 is modified (phosphoserine; by PKA). Thr89 is subject to Phosphothreonine; by PKC.

The protein belongs to the FXYD family. As to quaternary structure, homotetramer. Monomer. Regulatory subunit of the sodium/potassium-transporting ATPase (NKA) which is composed of a catalytic alpha subunit, an auxiliary non-catalytic beta subunit and an additional regulatory subunit. The monomeric form associates with NKA while the oligomeric form does not. Interacts with the catalytic alpha-1 subunit ATP1A1. Also interacts with the catalytic alpha-2 and alpha-3 subunits ATP1A2 and ATP1A3. Very little interaction with ATP1A1, ATP1A2 or ATP1A3 when phosphorylated at Ser-83. Interacts with the non-catalytic beta-1 subunit ATP1B1. Oxidative stress decreases interaction with ATP1A1 but increases interaction with ATP1B1. Post-translationally, major plasma membrane substrate for cAMP-dependent protein kinase (PKA) and protein kinase C (PKC) in several different tissues. Phosphorylated in response to insulin and adrenergic stimulation. Phosphorylation at Ser-88 stimulates sodium/potassium-transporting ATPase activity while the unphosphorylated form inhibits sodium/potassium-transporting ATPase activity. Phosphorylation increases tetramerization, decreases binding to ATP1A1 and reduces inhibition of ATP1A1 activity. Phosphorylation at Ser-83 leads to greatly reduced interaction with ATP1A1, ATP1A2 and ATP1A3. May be phosphorylated by DMPK. In terms of processing, palmitoylation increases half-life and stability and is enhanced upon phosphorylation at Ser-88 by PKA. As to expression, in the brain, detected in cerebellum and choroid plexus (at protein level).

It is found in the cell membrane. It localises to the sarcolemma. Its subcellular location is the apical cell membrane. The protein localises to the membrane. The protein resides in the caveola. It is found in the T-tubule. Functionally, associates with and regulates the activity of the sodium/potassium-transporting ATPase (NKA) which transports Na(+) out of the cell and K(+) into the cell. Inhibits NKA activity in its unphosphorylated state and stimulates activity when phosphorylated. Reduces glutathionylation of the NKA beta-1 subunit ATP1B1, thus reversing glutathionylation-mediated inhibition of ATP1B1. Contributes to female sexual development by maintaining the excitability of neurons which secrete gonadotropin-releasing hormone. The protein is Phospholemman of Bos taurus (Bovine).